A 90-amino-acid chain; its full sequence is Small ribosomal subunit protein bS16 (90 aa).

It belongs to the bacterial ribosomal protein bS16 family.

This is Small ribosomal subunit protein bS16 from Geobacillus sp. (strain WCH70).